The chain runs to 943 residues: Protein translocase subunit SecA (943 aa).

Residues Q90, 108–112, and D509 each bind ATP; that span reads GEGKT. The disordered stretch occupies residues 535–562; the sequence is PDNEHKPPIPKQRNSKSKGGFSRKAGSN.

The protein belongs to the SecA family. As to quaternary structure, monomer and homodimer. Part of the essential Sec protein translocation apparatus which comprises SecA, SecYEG and auxiliary proteins SecDF. Other proteins may also be involved.

It localises to the cell inner membrane. The protein resides in the cellular thylakoid membrane. The protein localises to the cytoplasm. It catalyses the reaction ATP + H2O + cellular proteinSide 1 = ADP + phosphate + cellular proteinSide 2.. Its function is as follows. Part of the Sec protein translocase complex. Interacts with the SecYEG preprotein conducting channel. Has a central role in coupling the hydrolysis of ATP to the transfer of proteins into and across the cell membrane, serving as an ATP-driven molecular motor driving the stepwise translocation of polypeptide chains across the membrane. Probably participates in protein translocation into and across both the cytoplasmic and thylakoid membranes in cyanobacterial cells. The chain is Protein translocase subunit SecA from Prochlorococcus marinus (strain AS9601).